We begin with the raw amino-acid sequence, 1183 residues long: DNA-directed RNA polymerase subunit beta (1183 aa).

This sequence belongs to the RNA polymerase beta chain family. The RNAP catalytic core consists of 2 alpha, 1 beta, 1 beta' and 1 omega subunit. When a sigma factor is associated with the core the holoenzyme is formed, which can initiate transcription.

The enzyme catalyses RNA(n) + a ribonucleoside 5'-triphosphate = RNA(n+1) + diphosphate. In terms of biological role, DNA-dependent RNA polymerase catalyzes the transcription of DNA into RNA using the four ribonucleoside triphosphates as substrates. This Staphylococcus aureus (strain Mu3 / ATCC 700698) protein is DNA-directed RNA polymerase subunit beta.